A 145-amino-acid polypeptide reads, in one-letter code: MIIDITEIMDWIPHRYPFLLVDRVLKIDPNKSITGIKNVTVNEPQFTGHFPARPVMPGVLMVEAMAQLAAVLVAKSLGSTKNKEVFLMTIENAKFRRIVQPGDTMYIHAVIDQQRANVWKFSSTVTVEGEIAAESKFTAMIKDKT.

The active site involves His-49.

It belongs to the thioester dehydratase family. FabZ subfamily.

It is found in the cytoplasm. The catalysed reaction is a (3R)-hydroxyacyl-[ACP] = a (2E)-enoyl-[ACP] + H2O. Functionally, involved in unsaturated fatty acids biosynthesis. Catalyzes the dehydration of short chain beta-hydroxyacyl-ACPs and long chain saturated and unsaturated beta-hydroxyacyl-ACPs. This Rickettsia africae (strain ESF-5) protein is 3-hydroxyacyl-[acyl-carrier-protein] dehydratase FabZ.